An 809-amino-acid polypeptide reads, in one-letter code: MPKQDSLWLKSLRWIQKYLVHTIVVPQDPFADLNLDASRPLAYVMKTESLSDIAALSEITAKLGLPSPYEPLVVNGVVAPRVVCLEGRKPLFGDRASNEPFLECFMRLLAVHKEKPELDIQLVPVSLYWGRTPGKEDDTMKAAVLERENPTWLRKCLMILFLGRHNFVQFSNAVSLRYMADEHGTDMGIAHKLARVARVHFRRQRKVMTGPVLPNRQALFDSLLKSESLRKAIQEEAASKKISETQARETAIEYLDEIAANYSDSLVRIAERFLTWLWNKLYSGINIKGAEQIRQLHHDGHEIVYVPCHRSHMDYLLLSYILYYQGMVPPHIAAGINLNFWPAGPLFRRGGAFFIRRSFNGNKLYTAVFREYLDQLFAKGYSVEYFSEGGRSRTGRLLAPKTGMIAMTINSVLRGIERPVTLVPVYLGYDHVMEVATYHKELSGKKKQKESVWQVFGAIRKLGNFGQGYVNFGEPITLQNFLNETAPNWRSEVADDPEQKPTWLTPAVNVLANRVMTRINDAAAASSITLTSLVLLASEQNALERCLLERQLDLYLTLLKRVPYTSFTSVAEGDGKHLVQQGLELNKFSISADPLGEIVSIDDKQAISMTYYRNNIIHLFIIPSLIASCLINNKQISRAQIFGVVNDFYPLLKAELFMGIKDLPSYVDQVLDLFIEQGLVEETELLSVATERASQMLLLAGSVNETLQRYAIIFNLLAHRPKMERSDLESESHLLAQRLGALHGITAPEFYDKKLYNTLSVKLKELGYFSGKEDKSDVERIREQANNLLRASVRQTIVASVTAEQSFNG.

Residues 309–314 carry the HXXXXD motif motif; sequence HRSHMD.

The protein belongs to the GPAT/DAPAT family.

It is found in the cell inner membrane. It carries out the reaction sn-glycerol 3-phosphate + an acyl-CoA = a 1-acyl-sn-glycero-3-phosphate + CoA. Its pathway is phospholipid metabolism; CDP-diacylglycerol biosynthesis; CDP-diacylglycerol from sn-glycerol 3-phosphate: step 1/3. In Shewanella oneidensis (strain ATCC 700550 / JCM 31522 / CIP 106686 / LMG 19005 / NCIMB 14063 / MR-1), this protein is Glycerol-3-phosphate acyltransferase.